The primary structure comprises 42 residues: VEWTDAERSAILSLWGKIDTDELGPALLARLXLVXXXTQRYF.

In terms of domain architecture, Globin spans 2-42; the sequence is EWTDAERSAILSLWGKIDTDELGPALLARLXLVXXXTQRYF.

This sequence belongs to the globin family. As to quaternary structure, heterotetramer of two alpha chains and two beta chains. As to expression, red blood cells.

Involved in oxygen transport from gills to the various peripheral tissues. This is Hemoglobin subunit beta-A from Catostomus clarkii (Desert sucker).